We begin with the raw amino-acid sequence, 391 residues long: Cytochrome P450 165A3 (391 aa).

The tract at residues 1-22 is disordered; it reads MFEEKNALRGTEIHRRERFDPG. C342 serves as a coordination point for heme.

It belongs to the cytochrome P450 family. The cofactor is heme.

It participates in antibiotic biosynthesis; vancomycin biosynthesis. Its function is as follows. Involved in the coupling of aromatic side chains of the heptapeptide of vancomycin. This chain is Cytochrome P450 165A3 (cyp165A3), found in Amycolatopsis orientalis (Nocardia orientalis).